The sequence spans 1484 residues: Chromosome partition protein MukB (1484 aa).

Position 34–41 (34–41) interacts with ATP; that stretch reads GGNGAGKS. 6 coiled-coil regions span residues 338–415, 496–604, 781–805, 835–868, 903–1115, and 1206–1265; these read NLVQ…RAIQ, QTAR…ALAW, AARE…ATLS, EAEM…HYDQ, HDAQ…SAKA, and DDPV…LQAV. The segment at 666–783 is flexible hinge; the sequence is PGGTDDARLT…AVPLFGRAAR (118 aa).

It belongs to the SMC family. MukB subfamily. Homodimerization via its hinge domain. Binds to DNA via its C-terminal region. Interacts, and probably forms a ternary complex, with MukE and MukF via its C-terminal region. The complex formation is stimulated by calcium or magnesium. Interacts with tubulin-related protein FtsZ.

It localises to the cytoplasm. The protein localises to the nucleoid. Plays a central role in chromosome condensation, segregation and cell cycle progression. Functions as a homodimer, which is essential for chromosome partition. Involved in negative DNA supercoiling in vivo, and by this means organize and compact chromosomes. May achieve or facilitate chromosome segregation by condensation DNA from both sides of a centrally located replisome during cell division. The protein is Chromosome partition protein MukB of Sodalis glossinidius (strain morsitans).